The chain runs to 367 residues: 3-dehydroquinate synthase (367 aa).

Residues 69 to 74 (DGEAFK), 103 to 107 (GVIGD), 127 to 128 (TT), lysine 140, and lysine 149 contribute to the NAD(+) site. Zn(2+) is bound by residues glutamate 182, histidine 245, and histidine 262.

It belongs to the sugar phosphate cyclases superfamily. Dehydroquinate synthase family. It depends on Co(2+) as a cofactor. Zn(2+) is required as a cofactor. NAD(+) serves as cofactor.

It is found in the cytoplasm. It catalyses the reaction 7-phospho-2-dehydro-3-deoxy-D-arabino-heptonate = 3-dehydroquinate + phosphate. Its pathway is metabolic intermediate biosynthesis; chorismate biosynthesis; chorismate from D-erythrose 4-phosphate and phosphoenolpyruvate: step 2/7. Functionally, catalyzes the conversion of 3-deoxy-D-arabino-heptulosonate 7-phosphate (DAHP) to dehydroquinate (DHQ). This chain is 3-dehydroquinate synthase, found in Pseudomonas syringae pv. syringae (strain B728a).